Consider the following 295-residue polypeptide: Ribosomal protein L11 methyltransferase (295 aa).

The S-adenosyl-L-methionine site is built by T139, G166, D188, and N231.

It belongs to the methyltransferase superfamily. PrmA family.

The protein resides in the cytoplasm. It catalyses the reaction L-lysyl-[protein] + 3 S-adenosyl-L-methionine = N(6),N(6),N(6)-trimethyl-L-lysyl-[protein] + 3 S-adenosyl-L-homocysteine + 3 H(+). In terms of biological role, methylates ribosomal protein L11. The protein is Ribosomal protein L11 methyltransferase of Cyanothece sp. (strain PCC 7425 / ATCC 29141).